Reading from the N-terminus, the 356-residue chain is Altered inheritance of mitochondria protein 23, mitochondrial (356 aa).

Residues 1-32 constitute a mitochondrion transit peptide; sequence MLKVPLSDVLSQKMLFLKSFRYFHCTKYFSRD.

This sequence belongs to the AIM23 family.

Its subcellular location is the mitochondrion. This Saccharomyces cerevisiae (strain ATCC 204508 / S288c) (Baker's yeast) protein is Altered inheritance of mitochondria protein 23, mitochondrial (AIM23).